Consider the following 72-residue polypeptide: Cell division protein ZapB (72 aa).

The stretch at 1–71 (MSLEILDQLE…LRSLLGRIDN (71 aa)) forms a coiled coil. Positions 36 to 56 (LSRQTNEQLRSENEHLKTEHH) are disordered. The segment covering 44–56 (LRSENEHLKTEHH) has biased composition (basic and acidic residues).

This sequence belongs to the ZapB family. As to quaternary structure, homodimer. The ends of the coiled-coil dimer bind to each other, forming polymers. Interacts with FtsZ.

It localises to the cytoplasm. Non-essential, abundant cell division factor that is required for proper Z-ring formation. It is recruited early to the divisome by direct interaction with FtsZ, stimulating Z-ring assembly and thereby promoting cell division earlier in the cell cycle. Its recruitment to the Z-ring requires functional FtsA or ZipA. The polypeptide is Cell division protein ZapB (Histophilus somni (strain 129Pt) (Haemophilus somnus)).